The following is a 163-amino-acid chain: Large ribosomal subunit protein uL10 (163 aa).

Belongs to the universal ribosomal protein uL10 family. In terms of assembly, part of the ribosomal stalk of the 50S ribosomal subunit. The N-terminus interacts with L11 and the large rRNA to form the base of the stalk. The C-terminus forms an elongated spine to which L12 dimers bind in a sequential fashion forming a multimeric L10(L12)X complex.

In terms of biological role, forms part of the ribosomal stalk, playing a central role in the interaction of the ribosome with GTP-bound translation factors. The chain is Large ribosomal subunit protein uL10 from Glaesserella parasuis serovar 5 (strain SH0165) (Haemophilus parasuis).